Here is a 238-residue protein sequence, read N- to C-terminus: 1-(5-phosphoribosyl)-5-[(5-phosphoribosylamino)methylideneamino] imidazole-4-carboxamide isomerase (238 aa).

Aspartate 8 serves as the catalytic Proton acceptor. Aspartate 129 (proton donor) is an active-site residue.

It belongs to the HisA/HisF family.

Its subcellular location is the cytoplasm. The catalysed reaction is 1-(5-phospho-beta-D-ribosyl)-5-[(5-phospho-beta-D-ribosylamino)methylideneamino]imidazole-4-carboxamide = 5-[(5-phospho-1-deoxy-D-ribulos-1-ylimino)methylamino]-1-(5-phospho-beta-D-ribosyl)imidazole-4-carboxamide. The protein operates within amino-acid biosynthesis; L-histidine biosynthesis; L-histidine from 5-phospho-alpha-D-ribose 1-diphosphate: step 4/9. The sequence is that of 1-(5-phosphoribosyl)-5-[(5-phosphoribosylamino)methylideneamino] imidazole-4-carboxamide isomerase from Clostridium kluyveri (strain NBRC 12016).